The following is a 98-amino-acid chain: Bombyxin E-1 (98 aa).

An N-terminal signal peptide occupies residues 1-19 (MNRPVFLVLLLTGFLCIAA). Pyrrolidone carboxylic acid is present on Gln-20. 3 cysteine pairs are disulfide-bonded: Cys-29-Cys-85, Cys-41-Cys-98, and Cys-84-Cys-89. Residues 50–75 (SESSLASYSSRGWPWLPTPNFNKRAI) constitute a propeptide, c peptide like.

It belongs to the insulin family. In terms of assembly, heterodimer of a B chain and an A chain linked by two disulfide bonds.

Its subcellular location is the secreted. PTTH is a brain peptide responsible for activation of prothoracic glands to produce ecdysone in insects. The chain is Bombyxin E-1 (BBXE1) from Bombyx mori (Silk moth).